The following is a 445-amino-acid chain: Signal recognition particle 54 kDa protein (445 aa).

GTP-binding positions include 102–109 (GVQGSGKT), 184–188 (DTAGR), and 244–247 (TKMD).

It belongs to the GTP-binding SRP family. SRP54 subfamily. In terms of assembly, part of the signal recognition particle protein translocation system, which is composed of SRP and FtsY. Archaeal SRP consists of a 7S RNA molecule of 300 nucleotides and two protein subunits: SRP54 and SRP19.

Its subcellular location is the cytoplasm. It carries out the reaction GTP + H2O = GDP + phosphate + H(+). Involved in targeting and insertion of nascent membrane proteins into the cytoplasmic membrane. Binds to the hydrophobic signal sequence of the ribosome-nascent chain (RNC) as it emerges from the ribosomes. The SRP-RNC complex is then targeted to the cytoplasmic membrane where it interacts with the SRP receptor FtsY. This Sulfurisphaera tokodaii (strain DSM 16993 / JCM 10545 / NBRC 100140 / 7) (Sulfolobus tokodaii) protein is Signal recognition particle 54 kDa protein.